The sequence spans 289 residues: ATP phosphoribosyltransferase (289 aa).

This sequence belongs to the ATP phosphoribosyltransferase family. Long subfamily. It depends on Mg(2+) as a cofactor.

The protein localises to the cytoplasm. The enzyme catalyses 1-(5-phospho-beta-D-ribosyl)-ATP + diphosphate = 5-phospho-alpha-D-ribose 1-diphosphate + ATP. Its pathway is amino-acid biosynthesis; L-histidine biosynthesis; L-histidine from 5-phospho-alpha-D-ribose 1-diphosphate: step 1/9. With respect to regulation, feedback inhibited by histidine. Catalyzes the condensation of ATP and 5-phosphoribose 1-diphosphate to form N'-(5'-phosphoribosyl)-ATP (PR-ATP). Has a crucial role in the pathway because the rate of histidine biosynthesis seems to be controlled primarily by regulation of HisG enzymatic activity. The polypeptide is ATP phosphoribosyltransferase (Methanosarcina acetivorans (strain ATCC 35395 / DSM 2834 / JCM 12185 / C2A)).